A 130-amino-acid polypeptide reads, in one-letter code: Glycine cleavage system H protein (130 aa).

Residues 25-107 form the Lipoyl-binding domain; the sequence is IATIGITEFA…YGEGWFLKVR (83 aa). Position 66 is an N6-lipoyllysine (lysine 66).

Belongs to the GcvH family. The glycine cleavage system is composed of four proteins: P, T, L and H. Requires (R)-lipoate as cofactor.

Functionally, the glycine cleavage system catalyzes the degradation of glycine. The H protein shuttles the methylamine group of glycine from the P protein to the T protein. The protein is Glycine cleavage system H protein of Nostoc sp. (strain PCC 7120 / SAG 25.82 / UTEX 2576).